Reading from the N-terminus, the 403-residue chain is CCA-adding enzyme (403 aa).

ATP is bound by residues glycine 32 and arginine 35. Residues glycine 32 and arginine 35 each coordinate CTP. The Mg(2+) site is built by aspartate 45 and aspartate 47. The ATP site is built by arginine 116, aspartate 159, arginine 162, arginine 165, and arginine 168. Residues arginine 116, aspartate 159, arginine 162, arginine 165, and arginine 168 each contribute to the CTP site.

The protein belongs to the tRNA nucleotidyltransferase/poly(A) polymerase family. Bacterial CCA-adding enzyme type 3 subfamily. As to quaternary structure, homodimer. It depends on Mg(2+) as a cofactor.

It carries out the reaction a tRNA precursor + 2 CTP + ATP = a tRNA with a 3' CCA end + 3 diphosphate. The catalysed reaction is a tRNA with a 3' CCA end + 2 CTP + ATP = a tRNA with a 3' CCACCA end + 3 diphosphate. Its function is as follows. Catalyzes the addition and repair of the essential 3'-terminal CCA sequence in tRNAs without using a nucleic acid template. Adds these three nucleotides in the order of C, C, and A to the tRNA nucleotide-73, using CTP and ATP as substrates and producing inorganic pyrophosphate. tRNA 3'-terminal CCA addition is required both for tRNA processing and repair. Also involved in tRNA surveillance by mediating tandem CCA addition to generate a CCACCA at the 3' terminus of unstable tRNAs. While stable tRNAs receive only 3'-terminal CCA, unstable tRNAs are marked with CCACCA and rapidly degraded. The protein is CCA-adding enzyme of Streptococcus suis (strain 98HAH33).